Here is a 299-residue protein sequence, read N- to C-terminus: Tyrosine recombinase XerC (299 aa).

One can recognise a Core-binding (CB) domain in the interval 1 to 85; sequence MERQLDAYCE…AVRGLYHYLN (85 aa). The region spanning 106 to 285 is the Tyr recombinase domain; it reads RLPKTLDTDR…DFQHLATVYD (180 aa). Residues Arg-146, Lys-170, His-237, Arg-240, and His-263 contribute to the active site. Catalysis depends on Tyr-272, which acts as the O-(3'-phospho-DNA)-tyrosine intermediate.

The protein belongs to the 'phage' integrase family. XerC subfamily. In terms of assembly, forms a cyclic heterotetrameric complex composed of two molecules of XerC and two molecules of XerD.

It is found in the cytoplasm. Its function is as follows. Site-specific tyrosine recombinase, which acts by catalyzing the cutting and rejoining of the recombining DNA molecules. The XerC-XerD complex is essential to convert dimers of the bacterial chromosome into monomers to permit their segregation at cell division. It also contributes to the segregational stability of plasmids. The chain is Tyrosine recombinase XerC from Pseudomonas fluorescens.